A 246-amino-acid chain; its full sequence is Ribonuclease 3 (246 aa).

Residues 16-144 enclose the RNase III domain; sequence LLEFQKQAGL…VIGAYYIDSG (129 aa). Glutamate 57 provides a ligand contact to Mg(2+). The active site involves aspartate 61. Mg(2+)-binding residues include aspartate 130 and glutamate 133. Residue glutamate 133 is part of the active site. Positions 171 to 240 constitute a DRBM domain; that stretch reads DYKSLLQELV…AKVAYENLCS (70 aa).

The protein belongs to the ribonuclease III family. Homodimer. Mg(2+) is required as a cofactor.

Its subcellular location is the cytoplasm. It carries out the reaction Endonucleolytic cleavage to 5'-phosphomonoester.. Digests double-stranded RNA. Involved in the processing of primary rRNA transcript to yield the immediate precursors to the large and small rRNAs (23S and 16S). Processes some mRNAs, and tRNAs when they are encoded in the rRNA operon. Processes pre-crRNA and tracrRNA of type II CRISPR loci if present in the organism. The protein is Ribonuclease 3 of Treponema denticola (strain ATCC 35405 / DSM 14222 / CIP 103919 / JCM 8153 / KCTC 15104).